A 290-amino-acid chain; its full sequence is Ribonuclease HIII (290 aa).

The 213-residue stretch at 78–290 (LPLIGTDEVG…FKNTEKAKNA (213 aa)) folds into the RNase H type-2 domain. Aspartate 84, glutamate 85, and aspartate 187 together coordinate a divalent metal cation.

This sequence belongs to the RNase HII family. RnhC subfamily. It depends on Mn(2+) as a cofactor. The cofactor is Mg(2+).

The protein resides in the cytoplasm. The enzyme catalyses Endonucleolytic cleavage to 5'-phosphomonoester.. Functionally, endonuclease that specifically degrades the RNA of RNA-DNA hybrids. The sequence is that of Ribonuclease HIII from Streptococcus pneumoniae (strain P1031).